The chain runs to 109 residues: Spermidine export protein MdtI (109 aa).

The Periplasmic portion of the chain corresponds to 1 to 5 (MAQFE). A helical membrane pass occupies residues 6–26 (WVHAAWLALAIVLEIIANVFL). The Cytoplasmic portion of the chain corresponds to 27-35 (KFSDGFRRK). Residues 36-56 (IFGLLSLAAVLAAFSALSQAV) traverse the membrane as a helical segment. Over 57-63 (KGIDLSV) the chain is Periplasmic. A helical membrane pass occupies residues 64–84 (AYALWGGFGIAATLAAGWILF). The Cytoplasmic portion of the chain corresponds to 85 to 87 (GQR). Residues 88-108 (LNRKGWIGLVLLLAGMIMVKL) traverse the membrane as a helical segment. Residue alanine 109 is a topological domain, periplasmic.

This sequence belongs to the drug/metabolite transporter (DMT) superfamily. Small multidrug resistance (SMR) (TC 2.A.7.1) family. MdtI subfamily. Forms a complex with MdtJ.

It localises to the cell inner membrane. Catalyzes the excretion of spermidine. This is Spermidine export protein MdtI (mdtI) from Escherichia coli O6:H1 (strain CFT073 / ATCC 700928 / UPEC).